Reading from the N-terminus, the 416-residue chain is Adenylosuccinate synthetase (416 aa).

GTP is bound by residues Gly13–Lys19 and Gly41–Thr43. Asp14 (proton acceptor) is an active-site residue. Mg(2+) is bound by residues Asp14 and Gly41. Residues Asp14–Lys17, Asn39–His42, Thr126, Arg140, Gln220, Thr235, and Arg299 contribute to the IMP site. His42 functions as the Proton donor in the catalytic mechanism. Val295–Arg301 serves as a coordination point for substrate. GTP-binding positions include Arg301, Lys327 to Asp329, and Ser405 to Ser407.

Belongs to the adenylosuccinate synthetase family. As to quaternary structure, homodimer. The cofactor is Mg(2+).

It is found in the cytoplasm. The enzyme catalyses IMP + L-aspartate + GTP = N(6)-(1,2-dicarboxyethyl)-AMP + GDP + phosphate + 2 H(+). It participates in purine metabolism; AMP biosynthesis via de novo pathway; AMP from IMP: step 1/2. Plays an important role in the de novo pathway of purine nucleotide biosynthesis. Catalyzes the first committed step in the biosynthesis of AMP from IMP. In Campylobacter lari (strain RM2100 / D67 / ATCC BAA-1060), this protein is Adenylosuccinate synthetase.